The primary structure comprises 105 residues: uncharacterized protein (105 aa).

The interval 58 to 105 is disordered; it reads YRKKKPNHSRDNPRINSNLSTNYAQAKSVERSRSNSLNSGPNPLENAT. 2 stretches are compositionally biased toward polar residues: residues 71–82 and 91–105; these read RINSNLSTNYAQ and SNSL…ENAT.

The protein localises to the mitochondrion. This is an uncharacterized protein from Arabidopsis thaliana (Mouse-ear cress).